The following is a 396-amino-acid chain: Elongation factor Tu (396 aa).

The tr-type G domain occupies 10–206; it reads KPHVNIGTIG…AVDESVPDPV (197 aa). Residues 19–26 form a G1 region; that stretch reads GHVDHGKT. Residue 19–26 coordinates GTP; it reads GHVDHGKT. Position 26 (Thr-26) interacts with Mg(2+). The tract at residues 62 to 66 is G2; it reads GITIN. The interval 83 to 86 is G3; that stretch reads DAPG. GTP contacts are provided by residues 83–87 and 138–141; these read DAPGH and NKSD. Residues 138–141 form a G4 region; the sequence is NKSD. A G5 region spans residues 176-178; the sequence is SGL.

This sequence belongs to the TRAFAC class translation factor GTPase superfamily. Classic translation factor GTPase family. EF-Tu/EF-1A subfamily. As to quaternary structure, monomer.

Its subcellular location is the cytoplasm. It catalyses the reaction GTP + H2O = GDP + phosphate + H(+). Its function is as follows. GTP hydrolase that promotes the GTP-dependent binding of aminoacyl-tRNA to the A-site of ribosomes during protein biosynthesis. The protein is Elongation factor Tu of Paenarthrobacter aurescens (strain TC1).